Reading from the N-terminus, the 146-residue chain is Large ribosomal subunit protein uL13 (146 aa).

The protein belongs to the universal ribosomal protein uL13 family. Part of the 50S ribosomal subunit.

Its function is as follows. This protein is one of the early assembly proteins of the 50S ribosomal subunit, although it is not seen to bind rRNA by itself. It is important during the early stages of 50S assembly. This Borreliella burgdorferi (strain ATCC 35210 / DSM 4680 / CIP 102532 / B31) (Borrelia burgdorferi) protein is Large ribosomal subunit protein uL13.